The following is a 359-amino-acid chain: MMP endo-(1,4)-3-O-methyl-alpha-D-mannosidase (359 aa).

As to quaternary structure, monomer in solution.

It carries out the reaction Endohydrolysis of 3-O-methyl-alpha-D-mannosyl-(1-&gt;4)-3-O-methyl-D-mannose linkages within (1,4)-3-O-methyl-alpha-D-mannnan substrates.. Its function is as follows. Hydrolase involved in the biosynthesis of 3-O-methylmannose polysaccharides (MMP), which are intracellular polymethylated polysaccharides implicated in the modulation of fatty acid metabolism in non-tuberculous mycobacteria. Highly specific hydrolase that catalyzes the internal cleavage of MMP. Is able to hydrolyze purified MMP into distinct lower order oligomannosides but does not cleave acylated or deacylated forms of 6-O-methylglucose lipopolysaccharide (MGLP), beta-mannans, synthetic 4alpha-oligomannosides or its own reaction products. Products were identified as four distinct oligomannosides differing in the number of mannose units (4 to 8) and methylation pattern (free or methylated C1-OH). Might serve as a recycling enzyme that hydrolyzes mature MMP into defined-size smaller oligomannosides that are, in turn, substrates for ManT and MeT1 activities for further processing into new daughter MMP chains. The chain is MMP endo-(1,4)-3-O-methyl-alpha-D-mannosidase from Mycolicibacterium hassiacum (strain DSM 44199 / CIP 105218 / JCM 12690 / 3849) (Mycobacterium hassiacum).